The following is a 341-amino-acid chain: S-adenosylmethionine:tRNA ribosyltransferase-isomerase (341 aa).

It belongs to the QueA family. In terms of assembly, monomer.

Its subcellular location is the cytoplasm. It carries out the reaction 7-aminomethyl-7-carbaguanosine(34) in tRNA + S-adenosyl-L-methionine = epoxyqueuosine(34) in tRNA + adenine + L-methionine + 2 H(+). Its pathway is tRNA modification; tRNA-queuosine biosynthesis. Its function is as follows. Transfers and isomerizes the ribose moiety from AdoMet to the 7-aminomethyl group of 7-deazaguanine (preQ1-tRNA) to give epoxyqueuosine (oQ-tRNA). This chain is S-adenosylmethionine:tRNA ribosyltransferase-isomerase, found in Clostridioides difficile (strain 630) (Peptoclostridium difficile).